A 190-amino-acid polypeptide reads, in one-letter code: Ribose 1,5-bisphosphate phosphokinase PhnN (190 aa).

An ATP-binding site is contributed by 10–17 (GPSGSGKD).

This sequence belongs to the ribose 1,5-bisphosphokinase family.

It catalyses the reaction alpha-D-ribose 1,5-bisphosphate + ATP = 5-phospho-alpha-D-ribose 1-diphosphate + ADP. Its pathway is metabolic intermediate biosynthesis; 5-phospho-alpha-D-ribose 1-diphosphate biosynthesis; 5-phospho-alpha-D-ribose 1-diphosphate from D-ribose 5-phosphate (route II): step 3/3. In terms of biological role, catalyzes the phosphorylation of ribose 1,5-bisphosphate to 5-phospho-D-ribosyl alpha-1-diphosphate (PRPP). This Pseudomonas fluorescens (strain SBW25) protein is Ribose 1,5-bisphosphate phosphokinase PhnN.